A 194-amino-acid chain; its full sequence is Fe/S biogenesis protein NfuA (194 aa).

[4Fe-4S] cluster contacts are provided by Cys151 and Cys154.

Belongs to the NfuA family. As to quaternary structure, homodimer. [4Fe-4S] cluster serves as cofactor.

Functionally, involved in iron-sulfur cluster biogenesis. Binds a 4Fe-4S cluster, can transfer this cluster to apoproteins, and thereby intervenes in the maturation of Fe/S proteins. Could also act as a scaffold/chaperone for damaged Fe/S proteins. The protein is Fe/S biogenesis protein NfuA of Aliivibrio fischeri (strain ATCC 700601 / ES114) (Vibrio fischeri).